Consider the following 122-residue polypeptide: Large ribosomal subunit protein uL22 (122 aa).

The interval 102 to 122 (VAEGKEMKSSKSHKKNQAEGK) is disordered.

Belongs to the universal ribosomal protein uL22 family. In terms of assembly, part of the 50S ribosomal subunit.

Functionally, this protein binds specifically to 23S rRNA; its binding is stimulated by other ribosomal proteins, e.g. L4, L17, and L20. It is important during the early stages of 50S assembly. It makes multiple contacts with different domains of the 23S rRNA in the assembled 50S subunit and ribosome. In terms of biological role, the globular domain of the protein is located near the polypeptide exit tunnel on the outside of the subunit, while an extended beta-hairpin is found that lines the wall of the exit tunnel in the center of the 70S ribosome. In Helicobacter pylori (strain G27), this protein is Large ribosomal subunit protein uL22.